Here is a 281-residue protein sequence, read N- to C-terminus: Sulfur carrier protein FdhD (281 aa).

The Cysteine persulfide intermediate role is filled by Cys117.

The protein belongs to the FdhD family.

It localises to the cytoplasm. Its function is as follows. Required for formate dehydrogenase (FDH) activity. Acts as a sulfur carrier protein that transfers sulfur from IscS to the molybdenum cofactor prior to its insertion into FDH. The polypeptide is Sulfur carrier protein FdhD (Xanthomonas campestris pv. campestris (strain 8004)).